A 370-amino-acid chain; its full sequence is Homoserine O-acetyltransferase (370 aa).

An AB hydrolase-1 domain is found at 44–350; the sequence is NAILVAHAWT…AYGHDAFLLE (307 aa). The Nucleophile role is filled by Ser150. Arg217 contacts substrate. Catalysis depends on residues Asp311 and His344. Asp345 contributes to the substrate binding site.

This sequence belongs to the AB hydrolase superfamily. MetX family. In terms of assembly, homodimer.

The protein resides in the cytoplasm. It carries out the reaction L-homoserine + acetyl-CoA = O-acetyl-L-homoserine + CoA. Its pathway is amino-acid biosynthesis; L-methionine biosynthesis via de novo pathway; O-acetyl-L-homoserine from L-homoserine: step 1/1. Its function is as follows. Transfers an acetyl group from acetyl-CoA to L-homoserine, forming acetyl-L-homoserine. This is Homoserine O-acetyltransferase from Geotalea uraniireducens (strain Rf4) (Geobacter uraniireducens).